Here is a 338-residue protein sequence, read N- to C-terminus: Anthranilate phosphoribosyltransferase (338 aa).

5-phospho-alpha-D-ribose 1-diphosphate contacts are provided by residues glycine 81, 84 to 85, threonine 89, 91 to 94, 109 to 117, and alanine 121; these read GD, NIST, and KHGNRALSS. Anthranilate is bound at residue glycine 81. Serine 93 contacts Mg(2+). Position 112 (asparagine 112) interacts with anthranilate. An anthranilate-binding site is contributed by arginine 167. Residues aspartate 225 and glutamate 226 each contribute to the Mg(2+) site.

The protein belongs to the anthranilate phosphoribosyltransferase family. Homodimer. Mg(2+) is required as a cofactor.

The enzyme catalyses N-(5-phospho-beta-D-ribosyl)anthranilate + diphosphate = 5-phospho-alpha-D-ribose 1-diphosphate + anthranilate. It functions in the pathway amino-acid biosynthesis; L-tryptophan biosynthesis; L-tryptophan from chorismate: step 2/5. Catalyzes the transfer of the phosphoribosyl group of 5-phosphorylribose-1-pyrophosphate (PRPP) to anthranilate to yield N-(5'-phosphoribosyl)-anthranilate (PRA). The sequence is that of Anthranilate phosphoribosyltransferase from Rhizobium etli (strain CIAT 652).